The sequence spans 443 residues: UDP-N-acetylmuramoylalanine--D-glutamate ligase (443 aa).

Residue Gly116–Thr122 participates in ATP binding.

This sequence belongs to the MurCDEF family.

It is found in the cytoplasm. The catalysed reaction is UDP-N-acetyl-alpha-D-muramoyl-L-alanine + D-glutamate + ATP = UDP-N-acetyl-alpha-D-muramoyl-L-alanyl-D-glutamate + ADP + phosphate + H(+). It participates in cell wall biogenesis; peptidoglycan biosynthesis. Functionally, cell wall formation. Catalyzes the addition of glutamate to the nucleotide precursor UDP-N-acetylmuramoyl-L-alanine (UMA). In Novosphingobium aromaticivorans (strain ATCC 700278 / DSM 12444 / CCUG 56034 / CIP 105152 / NBRC 16084 / F199), this protein is UDP-N-acetylmuramoylalanine--D-glutamate ligase.